Here is a 355-residue protein sequence, read N- to C-terminus: Class E basic helix-loop-helix protein 22 (355 aa).

Disordered stretches follow at residues 34–90 (AFRS…GGGG) and 128–215 (GRGS…KEQK). Gly residues-rich tracts occupy residues 81–90 (GGGGASGGGG) and 185–207 (GGSGLPPGGPTSGGGSGGGGGGS). In terms of domain architecture, bHLH spans 216–270 (ALRLNINARERRRMHDLNDALDELRAVIPYAHSPSVRKLSKIATLLLAKNYILMQ).

Interacts with PRDM8. Brain-specific, with the highest expression in the cerebellum.

It localises to the nucleus. In terms of biological role, inhibits DNA binding of TCF3/E47 homodimers and TCF3 (E47)/NEUROD1 heterodimers and acts as a strong repressor of Neurod1 and Myod-responsive genes, probably by heterodimerization with class a basic helix-loop-helix factors. Despite the presence of an intact basic domain, does not bind to DNA. In the brain, may function as an area-specific transcription factor that regulates the postmitotic acquisition of area identities and elucidate the genetic hierarchy between progenitors and postmitotic neurons driving neocortical arealization. May be required for the survival of a specific population of inhibitory neurons in the superficial laminae of the spinal cord dorsal horn that may regulate pruritis. Seems to play a crucial role in the retinogenesis, in the specification of amacrine and bipolar subtypes. Forms with PRDM8 a transcriptional repressor complex controlling genes involved in neural development and neuronal differentiation. In Mus musculus (Mouse), this protein is Class E basic helix-loop-helix protein 22 (Bhlhe22).